The primary structure comprises 529 residues: uncharacterized protein (529 aa).

Residues 1–20 (MGADLKQPQDADSPPKGVSR) are disordered. The tat-type signal signal peptide spans 1 to 52 (MGADLKQPQDADSPPKGVSRRRFLTTGAAAVVGTGVGAGGTALLSSHPRGPA).

Predicted to be exported by the Tat system. The position of the signal peptide cleavage has not been experimentally proven.

This is an uncharacterized protein from Mycobacterium tuberculosis (strain CDC 1551 / Oshkosh).